Reading from the N-terminus, the 485-residue chain is Alpha,alpha-trehalose-phosphate synthase [UDP-forming] (485 aa).

D-glucose 6-phosphate contacts are provided by Y99 and D153. The UDP site is built by R290 and K295. UDP-alpha-D-glucose is bound by residues R290 and K295. D-glucose 6-phosphate is bound at residue R328. Residues I367 and L393–E397 each bind UDP. Residues I367 and D389 to E397 contribute to the UDP-alpha-D-glucose site.

Belongs to the glycosyltransferase 20 family.

It carries out the reaction D-glucose 6-phosphate + UDP-alpha-D-glucose = alpha,alpha-trehalose 6-phosphate + UDP + H(+). The protein operates within carbohydrate biosynthesis. Its function is as follows. Synthase catalytic subunit of the trehalose synthase complex that catalyzes the production of trehalose from glucose-6-phosphate and UDP-alpha-D-glucose in a two step process. The polypeptide is Alpha,alpha-trehalose-phosphate synthase [UDP-forming] (Zygosaccharomyces rouxii).